The primary structure comprises 172 residues: DNA-directed RNA polymerase II subunit RPB7 (172 aa).

Belongs to the eukaryotic RPB7/RPC8 RNA polymerase subunit family. Component of the RNA polymerase II (Pol II) core complex consisting of 12 subunits: a ten-subunit catalytic core composed of POLR2A/RPB1, POLR2B/RPB2, POLR2C/RPB3, POLR2I/RPB9, POLR2J/RPB11, POLR2E/RPABC1, POLR2F/RPABC2, POLR2H/RPABC3, POLR2K/RPABC4 and POLR2L/RPABC5 and a mobile stalk composed of two subunits POLR2D/RPB4 and POLR2G/RPB7, protruding from the core and functioning primarily in transcription initiation. Part of Pol II(G) complex, in which Pol II core associates with an additional subunit POLR2M; unlike conventional Pol II, Pol II(G) functions as a transcriptional repressor. Part of TBP-based Pol II pre-initiation complex (PIC), in which Pol II core assembles with general transcription factors and other specific initiation factors including GTF2E1, GTF2E2, GTF2F1, GTF2F2, TCEA1, ERCC2, ERCC3, GTF2H2, GTF2H3, GTF2H4, GTF2H5, GTF2A1, GTF2A2, GTF2B and TBP; this large multi-subunit PIC complex mediates DNA unwinding and targets Pol II core to the transcription start site where the first phosphodiester bond forms.

The protein resides in the nucleus. In terms of biological role, core component of RNA polymerase II (Pol II), a DNA-dependent RNA polymerase which synthesizes mRNA precursors and many functional non-coding RNAs using the four ribonucleoside triphosphates as substrates. Pol II is the central component of the basal RNA polymerase II transcription machinery. It is composed of mobile elements that move relative to each other. POLR2G/RPB7 is part of a subcomplex with POLR2D/RPB4 that binds to a pocket formed by POLR2A/RPB1, POLR2B/RPB2 and POLR2F/RPABC2 at the base of the clamp element. The POLR2D/RPB4-POLR2G/RPB7 subcomplex seems to lock the clamp via POLR2G/RPB7 in the closed conformation thus preventing double-stranded DNA to enter the active site cleft. The POLR2D/RPB4-POLR2G/RPB7 subcomplex binds single-stranded DNA and RNA. This chain is DNA-directed RNA polymerase II subunit RPB7 (POLR2G), found in Bos taurus (Bovine).